Consider the following 223-residue polypeptide: Translation initiation factor 6 (223 aa).

This sequence belongs to the eIF-6 family.

In terms of biological role, binds to the 50S ribosomal subunit and prevents its association with the 30S ribosomal subunit to form the 70S initiation complex. The chain is Translation initiation factor 6 from Sulfolobus acidocaldarius (strain ATCC 33909 / DSM 639 / JCM 8929 / NBRC 15157 / NCIMB 11770).